Reading from the N-terminus, the 412-residue chain is Intraflagellar transport protein che-13 (412 aa).

Disordered stretches follow at residues 1-21 and 162-193; these read MEEE…GSAI and PPKE…NFLD. The span at 165-193 shows a compositional bias: acidic residues; the sequence is EEDEDTAVDEQDEDDDNDDIVEEPMNFLD. Residues 302-393 are a coiled coil; the sequence is QLASMMSKFR…VQIGVFEQSI (92 aa).

This sequence belongs to the IFT57 family. As to quaternary structure, component of the IFT complex B composed of at least che-2, che-13, dyf-1, dyf-3, dyf-6, dyf-11, dyf-13, ift-20, ift-74, ift-81, ifta-2, osm-1, osm-5 and osm-6.

The protein resides in the cytoplasm. It localises to the cytoskeleton. It is found in the cilium axoneme. Its function is as follows. Component of the intraflagellar transport (IFT) complex B required for transport of proteins in the motile cilium. May be required for ciliary entrance and transport of specific ciliary cargo proteins such as che-3 which are related to motility. Required for the formation of chemosensory cilia that detect chemosensory cues. This Caenorhabditis elegans protein is Intraflagellar transport protein che-13.